The following is a 95-amino-acid chain: UPF0235 protein PTH_1821 (95 aa).

Belongs to the UPF0235 family.

This chain is UPF0235 protein PTH_1821, found in Pelotomaculum thermopropionicum (strain DSM 13744 / JCM 10971 / SI).